A 118-amino-acid chain; its full sequence is Large ribosomal subunit protein bL20 (118 aa).

Belongs to the bacterial ribosomal protein bL20 family.

Its function is as follows. Binds directly to 23S ribosomal RNA and is necessary for the in vitro assembly process of the 50S ribosomal subunit. It is not involved in the protein synthesizing functions of that subunit. This Sodalis glossinidius (strain morsitans) protein is Large ribosomal subunit protein bL20.